The chain runs to 101 residues: ATP synthase subunit c (101 aa).

Transmembrane regions (helical) follow at residues 31-51 and 81-101; these read AFAY…GAGQ and AISE…IFVG.

The protein belongs to the ATPase C chain family. F-type ATPases have 2 components, F(1) - the catalytic core - and F(0) - the membrane proton channel. F(1) has five subunits: alpha(3), beta(3), gamma(1), delta(1), epsilon(1). F(0) has three main subunits: a(1), b(2) and c(10-14). The alpha and beta chains form an alternating ring which encloses part of the gamma chain. F(1) is attached to F(0) by a central stalk formed by the gamma and epsilon chains, while a peripheral stalk is formed by the delta and b chains.

It localises to the cell membrane. Functionally, f(1)F(0) ATP synthase produces ATP from ADP in the presence of a proton or sodium gradient. F-type ATPases consist of two structural domains, F(1) containing the extramembraneous catalytic core and F(0) containing the membrane proton channel, linked together by a central stalk and a peripheral stalk. During catalysis, ATP synthesis in the catalytic domain of F(1) is coupled via a rotary mechanism of the central stalk subunits to proton translocation. Its function is as follows. Key component of the F(0) channel; it plays a direct role in translocation across the membrane. A homomeric c-ring of between 10-14 subunits forms the central stalk rotor element with the F(1) delta and epsilon subunits. The sequence is that of ATP synthase subunit c from Mesomycoplasma hyopneumoniae (strain J / ATCC 25934 / NCTC 10110) (Mycoplasma hyopneumoniae).